Here is a 166-residue protein sequence, read N- to C-terminus: MQIILLQRIVNLGKLGETVDVKPGYGRNFLIPLGKALPATKANIEKFEARRAELEAEEAKEVAVAQERADALADVNVIMRAKSGDEGKLFGSIGTRDIAEALTNSGLEVDRAEIKLPEGTLRQIGEYNVDIQLHHDVTATILVTILSEDGDNEDLDENDATDENEE.

The protein belongs to the bacterial ribosomal protein bL9 family.

Its function is as follows. Binds to the 23S rRNA. This Psychrobacter arcticus (strain DSM 17307 / VKM B-2377 / 273-4) protein is Large ribosomal subunit protein bL9.